Reading from the N-terminus, the 338-residue chain is Methionine synthase (338 aa).

Zn(2+)-binding residues include H211, C213, and C294.

Belongs to the archaeal MetE family. Requires Zn(2+) as cofactor.

It functions in the pathway amino-acid biosynthesis; L-methionine biosynthesis via de novo pathway. Its function is as follows. Catalyzes the transfer of a methyl group to L-homocysteine resulting in methionine formation. The physiological methyl donor is unknown. In Sulfurisphaera tokodaii (strain DSM 16993 / JCM 10545 / NBRC 100140 / 7) (Sulfolobus tokodaii), this protein is Methionine synthase.